Reading from the N-terminus, the 193-residue chain is dCTP deaminase (193 aa).

DCTP-binding positions include 110–115, D128, 136–138, Y171, K178, and Q182; these read RSSLAR and VLE. E138 serves as the catalytic Proton donor/acceptor. The segment at 169–193 is disordered; that stretch reads RPYNRRQDAKYRDQQGAVASRIDKD.

It belongs to the dCTP deaminase family. In terms of assembly, homotrimer.

The catalysed reaction is dCTP + H2O + H(+) = dUTP + NH4(+). Its pathway is pyrimidine metabolism; dUMP biosynthesis; dUMP from dCTP (dUTP route): step 1/2. Functionally, catalyzes the deamination of dCTP to dUTP. This is dCTP deaminase from Citrobacter koseri (strain ATCC BAA-895 / CDC 4225-83 / SGSC4696).